Reading from the N-terminus, the 207-residue chain is Urease accessory protein UreG (207 aa).

G14–T21 contacts GTP.

The protein belongs to the SIMIBI class G3E GTPase family. UreG subfamily. Homodimer. UreD, UreF and UreG form a complex that acts as a GTP-hydrolysis-dependent molecular chaperone, activating the urease apoprotein by helping to assemble the nickel containing metallocenter of UreC. The UreE protein probably delivers the nickel.

The protein localises to the cytoplasm. Facilitates the functional incorporation of the urease nickel metallocenter. This process requires GTP hydrolysis, probably effectuated by UreG. The protein is Urease accessory protein UreG of Rhodopseudomonas palustris (strain BisB18).